The chain runs to 365 residues: Carbamoyl phosphate synthase small chain (365 aa).

CPSase regions lie at residues 1–166 and 1–169; these read MKRQ…PSPG and MKRQ…GRGH. Positions 45, 218, and 220 each coordinate L-glutamine. Residues 170–357 form the Glutamine amidotransferase type-1 domain; that stretch reads RVVLVDFGMK…LTMIENFKKE (188 aa). The active-site Nucleophile is C245. L-glutamine is bound by residues L246, Q249, N287, G289, and Y290. Catalysis depends on residues H330 and E332.

It belongs to the CarA family. In terms of assembly, composed of two chains; the small (or glutamine) chain promotes the hydrolysis of glutamine to ammonia, which is used by the large (or ammonia) chain to synthesize carbamoyl phosphate. Tetramer of heterodimers (alpha,beta)4.

It catalyses the reaction hydrogencarbonate + L-glutamine + 2 ATP + H2O = carbamoyl phosphate + L-glutamate + 2 ADP + phosphate + 2 H(+). The catalysed reaction is L-glutamine + H2O = L-glutamate + NH4(+). It participates in amino-acid biosynthesis; L-arginine biosynthesis; carbamoyl phosphate from bicarbonate: step 1/1. It functions in the pathway pyrimidine metabolism; UMP biosynthesis via de novo pathway; (S)-dihydroorotate from bicarbonate: step 1/3. Small subunit of the glutamine-dependent carbamoyl phosphate synthetase (CPSase). CPSase catalyzes the formation of carbamoyl phosphate from the ammonia moiety of glutamine, carbonate, and phosphate donated by ATP, constituting the first step of 2 biosynthetic pathways, one leading to arginine and/or urea and the other to pyrimidine nucleotides. The small subunit (glutamine amidotransferase) binds and cleaves glutamine to supply the large subunit with the substrate ammonia. The sequence is that of Carbamoyl phosphate synthase small chain from Bacillus cereus (strain ATCC 14579 / DSM 31 / CCUG 7414 / JCM 2152 / NBRC 15305 / NCIMB 9373 / NCTC 2599 / NRRL B-3711).